The following is a 213-amino-acid chain: Pyridoxine/pyridoxamine 5'-phosphate oxidase 2 (213 aa).

Substrate-binding positions include 9–12 and Lys67; that span reads RQRY. FMN contacts are provided by residues 62–67, 77–78, Lys84, and Gln106; these read RTVLLK and FT. Tyr124, Arg128, and Ser132 together coordinate substrate. Residues 141-142 and Trp186 contribute to the FMN site; that span reads QS. Residue 192 to 194 participates in substrate binding; it reads RLH. Arg196 provides a ligand contact to FMN.

Belongs to the pyridoxamine 5'-phosphate oxidase family. As to quaternary structure, homodimer. FMN is required as a cofactor.

The catalysed reaction is pyridoxamine 5'-phosphate + O2 + H2O = pyridoxal 5'-phosphate + H2O2 + NH4(+). The enzyme catalyses pyridoxine 5'-phosphate + O2 = pyridoxal 5'-phosphate + H2O2. Its pathway is cofactor metabolism; pyridoxal 5'-phosphate salvage; pyridoxal 5'-phosphate from pyridoxamine 5'-phosphate: step 1/1. It functions in the pathway cofactor metabolism; pyridoxal 5'-phosphate salvage; pyridoxal 5'-phosphate from pyridoxine 5'-phosphate: step 1/1. Its function is as follows. Catalyzes the oxidation of either pyridoxine 5'-phosphate (PNP) or pyridoxamine 5'-phosphate (PMP) into pyridoxal 5'-phosphate (PLP). This Hydrogenovibrio crunogenus (strain DSM 25203 / XCL-2) (Thiomicrospira crunogena) protein is Pyridoxine/pyridoxamine 5'-phosphate oxidase 2.